A 206-amino-acid chain; its full sequence is Small ribosomal subunit protein uS4 (206 aa).

Positions 29–52 (LDKRPYAPGQHGQRRGRGRPSDYS) are disordered. The S4 RNA-binding domain occupies 96-171 (RRLDNVVFRM…QKRRRVSPWV (76 aa)).

It belongs to the universal ribosomal protein uS4 family. In terms of assembly, part of the 30S ribosomal subunit. Contacts protein S5. The interaction surface between S4 and S5 is involved in control of translational fidelity.

Functionally, one of the primary rRNA binding proteins, it binds directly to 16S rRNA where it nucleates assembly of the body of the 30S subunit. In terms of biological role, with S5 and S12 plays an important role in translational accuracy. The protein is Small ribosomal subunit protein uS4 of Deinococcus deserti (strain DSM 17065 / CIP 109153 / LMG 22923 / VCD115).